The primary structure comprises 450 residues: Phosphoglucosamine mutase (450 aa).

Catalysis depends on Ser101, which acts as the Phosphoserine intermediate. Mg(2+)-binding residues include Ser101, Asp241, Asp243, and Asp245. Ser101 bears the Phosphoserine mark.

This sequence belongs to the phosphohexose mutase family. Mg(2+) serves as cofactor. Activated by phosphorylation.

The enzyme catalyses alpha-D-glucosamine 1-phosphate = D-glucosamine 6-phosphate. Functionally, catalyzes the conversion of glucosamine-6-phosphate to glucosamine-1-phosphate. The polypeptide is Phosphoglucosamine mutase (Listeria monocytogenes serovar 1/2a (strain ATCC BAA-679 / EGD-e)).